Reading from the N-terminus, the 499-residue chain is Apolipoprotein N-acyltransferase (499 aa).

Helical transmembrane passes span phenylalanine 18–threonine 38, leucine 50–isoleucine 70, isoleucine 82–leucine 102, phenylalanine 105–isoleucine 125, proline 156–leucine 176, and serine 182–phenylalanine 202. The CN hydrolase domain maps to isoleucine 217–serine 461. Glutamate 257 functions as the Proton acceptor in the catalytic mechanism. Residue lysine 320 is part of the active site. The active-site Nucleophile is the cysteine 372. The chain crosses the membrane as a helical span at residues leucine 476–phenylalanine 496.

Belongs to the CN hydrolase family. Apolipoprotein N-acyltransferase subfamily.

It localises to the cell membrane. It catalyses the reaction N-terminal S-1,2-diacyl-sn-glyceryl-L-cysteinyl-[lipoprotein] + a glycerophospholipid = N-acyl-S-1,2-diacyl-sn-glyceryl-L-cysteinyl-[lipoprotein] + a 2-acyl-sn-glycero-3-phospholipid + H(+). It functions in the pathway protein modification; lipoprotein biosynthesis (N-acyl transfer). Its function is as follows. Catalyzes the phospholipid dependent N-acylation of the N-terminal cysteine of apolipoprotein, the last step in lipoprotein maturation. This chain is Apolipoprotein N-acyltransferase, found in Wigglesworthia glossinidia brevipalpis.